Here is a 380-residue protein sequence, read N- to C-terminus: Methenyltetrahydrofolate synthase domain-containing protein (380 aa).

Residues 245–258 (EEQAGKDVTLRDGP) are compositionally biased toward basic and acidic residues. Disordered regions lie at residues 245–283 (EEQA…PLSS) and 361–380 (LVGS…IAGP). An RRM domain is found at 282–355 (SSVQIGNLPR…NTVRVVLARQ (74 aa)).

The polypeptide is Methenyltetrahydrofolate synthase domain-containing protein (MTHFSD) (Bos taurus (Bovine)).